Reading from the N-terminus, the 224-residue chain is Large ribosomal subunit protein uL16z (224 aa).

The protein belongs to the universal ribosomal protein uL16 family. In terms of assembly, component of the small ribosomal subunit. Mature ribosomes consist of a small (40S) and a large (60S) subunit. The 40S subunit contains about 33 different proteins and 1 molecule of RNA (18S). The 60S subunit contains about 49 different proteins and 3 molecules of RNA (25S, 5.8S and 5S).

The chain is Large ribosomal subunit protein uL16z (SC34) from Oryza sativa subsp. indica (Rice).